A 261-amino-acid polypeptide reads, in one-letter code: Triosephosphate isomerase (261 aa).

10–12 (NWK) serves as a coordination point for substrate. The active-site Electrophile is the His-100. The active-site Proton acceptor is Glu-172. Substrate is bound by residues Gly-178, Ser-218, and 239–240 (GG).

The protein belongs to the triosephosphate isomerase family. Homodimer.

Its subcellular location is the cytoplasm. The enzyme catalyses D-glyceraldehyde 3-phosphate = dihydroxyacetone phosphate. The protein operates within carbohydrate biosynthesis; gluconeogenesis. Its pathway is carbohydrate degradation; glycolysis; D-glyceraldehyde 3-phosphate from glycerone phosphate: step 1/1. In terms of biological role, involved in the gluconeogenesis. Catalyzes stereospecifically the conversion of dihydroxyacetone phosphate (DHAP) to D-glyceraldehyde-3-phosphate (G3P). In Mycolicibacterium vanbaalenii (strain DSM 7251 / JCM 13017 / BCRC 16820 / KCTC 9966 / NRRL B-24157 / PYR-1) (Mycobacterium vanbaalenii), this protein is Triosephosphate isomerase.